Here is a 279-residue protein sequence, read N- to C-terminus: Methyltransferase trt5 (279 aa).

S-adenosyl-L-methionine is bound by residues 124-125 (DI) and 152-153 (DV).

The protein belongs to the class I-like SAM-binding methyltransferase superfamily. As to quaternary structure, homodimer.

Its pathway is secondary metabolite biosynthesis; terpenoid biosynthesis. Methyltransferase; part of the gene cluster that mediates the biosynthesis of terretonin, a fungal meroterpenoid that acts as a mycotoxin. The first step of the pathway is the synthesis of 3,5-dimethylorsellinic acid (DMOA) by the polyketide synthase trt4. DMOA is then prenylated into farnesyl-DMOA by the polyprenyl transferase trt2. Methylation by the methyltransferase trt5 then leads to farnesyl-DMOA methyl ester which is further subject to epoxidation by the FAD-dependent monooxygenase trt8 to yield epoxyfarnesyl-DMOA methyl ester. Cyclization of epoxyfarnesyl-DMOA methyl ester by the terpene cyclase trt1 leads to a tetracycle intermediate which is in turn converted to preterretonin. Dehydrogenase trt9 comes next to transform preterretonin to preterrenoid. The FAD-dependent monooxygenase trt3 is then required for the C-hydroxylation at C16 of preterrenoid to yield terrenoid. The cytochrome P450 trt6 catalyzes three successive oxidations to transform terrenoid into an unstable intermediate, which then undergoes the D-ring expansion and unusual rearrangement of the methoxy group to afford the core skeleton of terretonin. Trt14 catalyzes the D-ring expansion of terretonin involving intramolecular methoxy rearrangement as well as the hydrolysis of the expanded D-ring and the methyl ester moiety. Finally, the nonheme iron-dependent dioxygenase trt7 accomplishes the last two oxidation reactions steps to complete the biosynthesis of terretonin. Terretonin C is produced via spontaneous decarboxylation of the terretonin precursor. Another shunt product of the terretonin biosynthesis is dihydrofarnesyl-DMOA, derived from epoxyfarnesyl-DMOA through hydrolysis of the epoxide. The protein is Methyltransferase trt5 of Aspergillus terreus (strain NIH 2624 / FGSC A1156).